The primary structure comprises 215 residues: Adenylate kinase (215 aa).

10-15 (GAGKGT) serves as a coordination point for ATP. The tract at residues 30 to 59 (STGDILRDAVSKGTELGKMAKAIMDRGELV) is NMP. Residues Thr31, Arg36, 57-59 (ELV), 82-85 (GYPR), and Gln89 contribute to the AMP site. Positions 123–160 (NRRVCPNCGKVYNLITLQPKEDEKCDVCGTKLIQRDDD) are LID. Arg124 is a binding site for ATP. The Zn(2+) site is built by Cys127 and Cys130. Position 133–134 (133–134 (VY)) interacts with ATP. Zn(2+) contacts are provided by Cys147 and Cys150. AMP-binding residues include Arg157 and Arg168. ATP is bound at residue Gln196.

It belongs to the adenylate kinase family. In terms of assembly, monomer.

It localises to the cytoplasm. The enzyme catalyses AMP + ATP = 2 ADP. Its pathway is purine metabolism; AMP biosynthesis via salvage pathway; AMP from ADP: step 1/1. Its function is as follows. Catalyzes the reversible transfer of the terminal phosphate group between ATP and AMP. Plays an important role in cellular energy homeostasis and in adenine nucleotide metabolism. This chain is Adenylate kinase, found in Petrotoga mobilis (strain DSM 10674 / SJ95).